A 392-amino-acid polypeptide reads, in one-letter code: Flavohemoprotein (392 aa).

A Globin domain is found at 1-139 (MLNAEQRAII…LADILIGAEE (139 aa)). Histidine 85 contacts heme b. Active-site charge relay system residues include tyrosine 95 and glutamate 138. A reductase region spans residues 150–392 (GGWRGTREFR…EFFGPAAALE (243 aa)). Residues 153-256 (RGTREFRLVR…FPPAGDFTLA (104 aa)) form the FAD-binding FR-type domain. FAD-binding positions include tyrosine 191 and 205-208 (RNYS). 268 to 273 (GVGITP) provides a ligand contact to NADP(+). Position 384–387 (384–387 (FFGP)) interacts with FAD.

Belongs to the globin family. Two-domain flavohemoproteins subfamily. The protein in the C-terminal section; belongs to the flavoprotein pyridine nucleotide cytochrome reductase family. Heme b is required as a cofactor. Requires FAD as cofactor.

It catalyses the reaction 2 nitric oxide + NADPH + 2 O2 = 2 nitrate + NADP(+) + H(+). The enzyme catalyses 2 nitric oxide + NADH + 2 O2 = 2 nitrate + NAD(+) + H(+). Its function is as follows. Is involved in NO detoxification in an aerobic process, termed nitric oxide dioxygenase (NOD) reaction that utilizes O(2) and NAD(P)H to convert NO to nitrate, which protects the bacterium from various noxious nitrogen compounds. Therefore, plays a central role in the inducible response to nitrosative stress. This Pseudomonas putida (strain ATCC 47054 / DSM 6125 / CFBP 8728 / NCIMB 11950 / KT2440) protein is Flavohemoprotein.